Consider the following 81-residue polypeptide: Sulfur carrier protein TusA (81 aa).

Cys-19 functions as the Cysteine persulfide intermediate in the catalytic mechanism.

It belongs to the sulfur carrier protein TusA family.

The protein localises to the cytoplasm. Sulfur carrier protein which probably makes part of a sulfur-relay system. In Aeromonas salmonicida (strain A449), this protein is Sulfur carrier protein TusA.